The primary structure comprises 318 residues: Taste receptor type 2 member 117 (318 aa).

The Extracellular segment spans residues 1–16 (MQHNLKTIFVISHSTL). Residues 17–37 (TIILFTELVTGIIGNGFMALV) form a helical membrane-spanning segment. Residues 38 to 53 (HCMDWLRRKKISLVNQ) lie on the Cytoplasmic side of the membrane. The chain crosses the membrane as a helical span at residues 54–74 (ILTALAISRIFQLCLLFISLV). The Extracellular portion of the chain corresponds to 75 to 93 (ISFSYPDLTTTSLIKVTCN). Residues 94–114 (LWIIVNHFNIWLATCLGIFYF) traverse the membrane as a helical segment. At 115 to 134 (LKISNFSNSLFLYLKWRVEK) the chain is on the cytoplasmic side. A helical membrane pass occupies residues 135-155 (VVLVTLLVSLVLLTLNSLLIN). At 156–189 (LEINICINEYQRNITYSFNSYYHANCHRQMLSLH) the chain is on the extracellular side. Asn168 is a glycosylation site (N-linked (GlcNAc...) asparagine). A helical transmembrane segment spans residues 190-210 (IIFLSVPFVLSLSTFLLLIFS). The Cytoplasmic segment spans residues 211 to 238 (LGTHHKKMQQHVQGRRDASTMAHFKALQ). A helical transmembrane segment spans residues 239-259 (TVIAFLLLYSIFILSVLVQIW). At 260-268 (KYELLKKNL) the chain is on the extracellular side. Residues 269 to 289 (FILFCQVAYVAFPSFHSYILI) form a helical membrane-spanning segment. The Cytoplasmic portion of the chain corresponds to 290–318 (LGDMKMRQACLSVLWWQKFRKNYVEPLDL).

The protein belongs to the G-protein coupled receptor T2R family.

It is found in the membrane. Putative taste receptor which may play a role in the perception of bitterness. The chain is Taste receptor type 2 member 117 from Rattus norvegicus (Rat).